The chain runs to 710 residues: PC3-like endoprotease variant B (710 aa).

An N-terminal signal peptide occupies residues 1 to 29; it reads MNYRGIYRRRYVFVLLLLVAVVNISYGWT. Asn-23, Asn-62, and Asn-190 each carry an N-linked (GlcNAc...) asparagine glycan. A propeptide spanning residues 30 to 152 is cleaved from the precursor; sequence VLKNKDYKRR…QQKILERVKR (123 aa). Residues 164 to 486 form the Peptidase S8 domain; sequence MWYLLNTGQA…FGRLDANAMV (323 aa). Active-site charge relay system residues include Asp-202 and His-242. 2 disulfide bridges follow: Cys-259/Cys-411 and Cys-351/Cys-381. Ser-419 (charge relay system) is an active-site residue. Residues 495 to 638 enclose the P/Homo B domain; that stretch reads LPAQRKCTAA…EERVIDTQTK (144 aa). An intrachain disulfide couples Cys-501 to Cys-527. The tract at residues 668–710 is disordered; that stretch reads TIEGSTQDHVKPKEGAKEPWGNYRNTNNINNNSSTAFKRKKKQ. A compositionally biased stretch (basic and acidic residues) spans 673-684; sequence TQDHVKPKEGAK. The segment covering 689-699 has biased composition (low complexity); the sequence is NYRNTNNINNN. N-linked (GlcNAc...) asparagine glycans are attached at residues Asn-698 and Asn-699.

It belongs to the peptidase S8 family. Furin subfamily. As to expression, predominantly in the body column.

In terms of biological role, probably involved in the processing of hormone and other protein precursors at sites comprised of pairs of basic amino acid residues. This chain is PC3-like endoprotease variant B, found in Hydra vulgaris (Hydra).